Reading from the N-terminus, the 716-residue chain is Fatty acid oxidation complex subunit alpha (716 aa).

Residues 1-189 form an enoyl-CoA hydratase/isomerase region; sequence MIYQSPTIQV…KVGAVDSVVA (189 aa). Substrate is bound at residue Asp-296. The tract at residues 311-716 is 3-hydroxyacyl-CoA dehydrogenase; it reads KEVNNAAVLG…AANNGSYYQA (406 aa). Residues Met-324, Asp-343, 400 to 402, Lys-407, and Ser-429 each bind NAD(+); that span reads VVE. His-450 functions as the For 3-hydroxyacyl-CoA dehydrogenase activity in the catalytic mechanism. NAD(+) is bound at residue Asn-453. The substrate site is built by Asn-500 and Tyr-660.

In the N-terminal section; belongs to the enoyl-CoA hydratase/isomerase family. This sequence in the C-terminal section; belongs to the 3-hydroxyacyl-CoA dehydrogenase family. Heterotetramer of two alpha chains (FadB) and two beta chains (FadA).

The catalysed reaction is a (3S)-3-hydroxyacyl-CoA + NAD(+) = a 3-oxoacyl-CoA + NADH + H(+). It catalyses the reaction a (3S)-3-hydroxyacyl-CoA = a (2E)-enoyl-CoA + H2O. The enzyme catalyses a 4-saturated-(3S)-3-hydroxyacyl-CoA = a (3E)-enoyl-CoA + H2O. It carries out the reaction (3S)-3-hydroxybutanoyl-CoA = (3R)-3-hydroxybutanoyl-CoA. The catalysed reaction is a (3Z)-enoyl-CoA = a 4-saturated (2E)-enoyl-CoA. It catalyses the reaction a (3E)-enoyl-CoA = a 4-saturated (2E)-enoyl-CoA. Its pathway is lipid metabolism; fatty acid beta-oxidation. Functionally, involved in the aerobic and anaerobic degradation of long-chain fatty acids via beta-oxidation cycle. Catalyzes the formation of 3-oxoacyl-CoA from enoyl-CoA via L-3-hydroxyacyl-CoA. It can also use D-3-hydroxyacyl-CoA and cis-3-enoyl-CoA as substrate. The protein is Fatty acid oxidation complex subunit alpha of Shewanella baltica (strain OS185).